We begin with the raw amino-acid sequence, 178 residues long: Gluconokinase (178 aa).

Residue 19–26 (GVSGTGKT) coordinates ATP.

Belongs to the gluconokinase GntK/GntV family. Monomer.

The enzyme catalyses D-gluconate + ATP = 6-phospho-D-gluconate + ADP + H(+). It participates in carbohydrate acid metabolism; D-gluconate degradation. Its activity is regulated as follows. Activated by magnesium. Its function is as follows. Phosphorylates gluconate to 6-phosphogluconate. The sequence is that of Gluconokinase from Gluconobacter oxydans (strain 621H) (Gluconobacter suboxydans).